Consider the following 618-residue polypeptide: Dihydroxy-acid dehydratase (618 aa).

Asp81 serves as a coordination point for Mg(2+). Residue Cys122 coordinates [2Fe-2S] cluster. Positions 123 and 124 each coordinate Mg(2+). N6-carboxylysine is present on Lys124. Residue Cys195 coordinates [2Fe-2S] cluster. Residue Glu490 coordinates Mg(2+). Ser516 (proton acceptor) is an active-site residue.

The protein belongs to the IlvD/Edd family. In terms of assembly, homodimer. It depends on [2Fe-2S] cluster as a cofactor. The cofactor is Mg(2+).

The catalysed reaction is (2R)-2,3-dihydroxy-3-methylbutanoate = 3-methyl-2-oxobutanoate + H2O. The enzyme catalyses (2R,3R)-2,3-dihydroxy-3-methylpentanoate = (S)-3-methyl-2-oxopentanoate + H2O. Its pathway is amino-acid biosynthesis; L-isoleucine biosynthesis; L-isoleucine from 2-oxobutanoate: step 3/4. It functions in the pathway amino-acid biosynthesis; L-valine biosynthesis; L-valine from pyruvate: step 3/4. Functionally, functions in the biosynthesis of branched-chain amino acids. Catalyzes the dehydration of (2R,3R)-2,3-dihydroxy-3-methylpentanoate (2,3-dihydroxy-3-methylvalerate) into 2-oxo-3-methylpentanoate (2-oxo-3-methylvalerate) and of (2R)-2,3-dihydroxy-3-methylbutanoate (2,3-dihydroxyisovalerate) into 2-oxo-3-methylbutanoate (2-oxoisovalerate), the penultimate precursor to L-isoleucine and L-valine, respectively. This chain is Dihydroxy-acid dehydratase, found in Gluconobacter oxydans (strain 621H) (Gluconobacter suboxydans).